A 94-amino-acid chain; its full sequence is Co-chaperonin GroES (94 aa).

This sequence belongs to the GroES chaperonin family. As to quaternary structure, heptamer of 7 subunits arranged in a ring. Interacts with the chaperonin GroEL.

Its subcellular location is the cytoplasm. In terms of biological role, together with the chaperonin GroEL, plays an essential role in assisting protein folding. The GroEL-GroES system forms a nano-cage that allows encapsulation of the non-native substrate proteins and provides a physical environment optimized to promote and accelerate protein folding. GroES binds to the apical surface of the GroEL ring, thereby capping the opening of the GroEL channel. The chain is Co-chaperonin GroES from Staphylococcus aureus (strain Mu50 / ATCC 700699).